A 190-amino-acid polypeptide reads, in one-letter code: B3 domain-containing protein Os02g0764100 (190 aa).

A DNA-binding region (TF-B3) is located at residues 17-121 (FEKAVTPSDV…KLLFIDCKKN (105 aa)).

It localises to the nucleus. In Oryza sativa subsp. japonica (Rice), this protein is B3 domain-containing protein Os02g0764100.